The following is a 361-amino-acid chain: MAGCRDPRVVDTLHLLLLVAVLPLAVSGVRRGAVDWTQEKNYHQPALLNVSSLRQVAEGTSISEMWQNDLRPLLIERYPGSPGSFAARQHIMQRIQRLQADWVLEVDTFLSQTPYGYRSFSNIISTLNPTAKRHLVLACHYDSKYFPHWDDRVFVGATDSAVPCAMMLELARALDKQLFSLKNISDSRPDLSLQLIFFDGEEAFHLWSPQDSLYGSRHLASKMASTPHPPGARDTNQLHGMDLLVLLDLIGAPFPTFPNFFPNTARWFGRLEAIEHGLRELGLLKDHSSERWYFRNYGYGGVIQDDHIPFLRRGVPVLHLISSPFPEVWHTMDDNEENLDRTTIDNLNKILQVFVLEYLHL.

The N-terminal stretch at 1 to 28 is a signal peptide; the sequence is MAGCRDPRVVDTLHLLLLVAVLPLAVSG. An N-linked (GlcNAc...) asparagine glycan is attached at Asn-49. Cys-139 and Cys-164 are disulfide-bonded. Residue Asp-159 coordinates Zn(2+). Residue Asn-183 is glycosylated (N-linked (GlcNAc...) asparagine). Glu-201 functions as the Proton acceptor in the catalytic mechanism. A Zn(2+)-binding site is contributed by Glu-202. The active-site Proton acceptor is Asp-248. Residue His-330 coordinates Zn(2+).

The protein belongs to the glutaminyl-peptide cyclotransferase family. As to expression, expressed mainly in brain tissue.

It localises to the secreted. It carries out the reaction N-terminal L-glutaminyl-[peptide] = N-terminal 5-oxo-L-prolyl-[peptide] + NH4(+). Its function is as follows. Responsible for the biosynthesis of pyroglutamyl peptides. Has a bias against acidic and tryptophan residues adjacent to the N-terminal glutaminyl residue and a lack of importance of chain length after the second residue. Also catalyzes N-terminal pyroglutamate formation. This is Glutaminyl-peptide cyclotransferase (QPCT) from Bos taurus (Bovine).